A 294-amino-acid polypeptide reads, in one-letter code: Cytidine deaminase (294 aa).

CMP/dCMP-type deaminase domains lie at 48–168 (DEDA…FGPK) and 186–294 (LTGD…TLLA). Position 89–91 (89–91 (NME)) interacts with substrate. His-102 is a Zn(2+) binding site. The active-site Proton donor is Glu-104. Zn(2+) is bound by residues Cys-129 and Cys-132.

This sequence belongs to the cytidine and deoxycytidylate deaminase family. In terms of assembly, homodimer. Zn(2+) serves as cofactor.

The catalysed reaction is cytidine + H2O + H(+) = uridine + NH4(+). The enzyme catalyses 2'-deoxycytidine + H2O + H(+) = 2'-deoxyuridine + NH4(+). This enzyme scavenges exogenous and endogenous cytidine and 2'-deoxycytidine for UMP synthesis. The sequence is that of Cytidine deaminase from Enterobacter sp. (strain 638).